The primary structure comprises 187 residues: MISLSDFVNRFQLQLPPPPKRLSDNNRHAAVLLPIICKPKPTLLLTRRSATLRSHAGQVAFPGGVADPKDKSIIATALREAEEEVNIPHQKVQVLGQLAPLNSSGGYLVTPIVGLLPPGLSLHSNPAEVAKIFEVPLSEALSLSSYHYLDVSRRGQQHRVYFYWYQQHLIWGLTATIIHQLAQQVQV.

In terms of domain architecture, Nudix hydrolase spans 26–157; that stretch reads NRHAAVLLPI…YLDVSRRGQQ (132 aa). The short motif at 64 to 86 is the Nudix box element; that stretch reads GVADPKDKSIIATALREAEEEVN. Mg(2+) is bound by residues E80 and E84.

This sequence belongs to the Nudix hydrolase family. PCD1 subfamily. It depends on Mn(2+) as a cofactor. Mg(2+) serves as cofactor.

Probably mediates the hydrolysis of some nucleoside diphosphate derivatives. This is an uncharacterized protein from Photorhabdus laumondii subsp. laumondii (strain DSM 15139 / CIP 105565 / TT01) (Photorhabdus luminescens subsp. laumondii).